The sequence spans 308 residues: uncharacterized protein (308 aa).

Residues 1–19 (MKLLLILILIINNYNLCLS) form the signal peptide. 2 N-linked (GlcNAc...) asparagine glycosylation sites follow: Asn-25 and Asn-300.

The protein resides in the secreted. This is an uncharacterized protein from Dictyostelium discoideum (Social amoeba).